The chain runs to 362 residues: Homoserine O-acetyltransferase FUB5 (362 aa).

The AB hydrolase-1 domain maps to 12-335 (NVMIICHALS…VSDDGHDAFL (324 aa)). The active-site Nucleophile is Ser110. Positions 195 to 232 (RFGRDTGNKKKTQQQDSKTIPNNGTPIHSQGGADETPV) are disordered. The segment covering 208-222 (QQDSKTIPNNGTPIH) has biased composition (polar residues). Residues Asp302 and His331 contribute to the active site.

Belongs to the AB hydrolase superfamily. MetX family.

It carries out the reaction L-homoserine + acetyl-CoA = O-acetyl-L-homoserine + CoA. The protein operates within mycotoxin biosynthesis. Functionally, homoserine O-acetyltransferase; part of the gene cluster that mediates the biosynthesis of fusaric acid, a mycotoxin with low to moderate toxicity to animals and humans, but with high phytotoxic properties. L-aspartate is suggested as fusaric acid amino acid precursor that is activated and further processed to O-acetyl-L-homoserine by cluster enzymes aspartate kinase FUB3 and homoserine O-acetyltransferase FUB5, as well as enzymes of the primary metabolism. The polyketide synthase (PKS) FUB1 generates the triketide trans-2-hexenal which is presumptively released by the hydrolase FUB4 and linked to the NRPS-bound amino acid precursor by NAD(P)-dependent dehydrogenase FUB6. FUB1, FUB4, and the non-canonical NRPS Fub8 may form an enzyme complex. Further processing of the NRPS-bound intermediate might be carried out by FUB6 and the O-acetylhomoserine FUB7, enabling a spontaneous electrocyclization to close the carbon backbone of fusaric acid. Dihydrofusaric acid is likely to be released via reduction by the thioester reductase (TR) domain of FUB8 whereupon the final oxidation to fusaric acid may (also) be performed by the FMN-dependent dehydrogenase FUB9. This chain is Homoserine O-acetyltransferase FUB5, found in Fusarium oxysporum f. sp. lycopersici (strain 4287 / CBS 123668 / FGSC 9935 / NRRL 34936) (Fusarium vascular wilt of tomato).